A 162-amino-acid polypeptide reads, in one-letter code: Precorrin-2 dehydrogenase (162 aa).

Residues 20–21 and 41–42 each bind NAD(+); these read SI and PD.

This sequence belongs to the precorrin-2 dehydrogenase / sirohydrochlorin ferrochelatase family.

The enzyme catalyses precorrin-2 + NAD(+) = sirohydrochlorin + NADH + 2 H(+). Its pathway is cofactor biosynthesis; adenosylcobalamin biosynthesis; sirohydrochlorin from precorrin-2: step 1/1. It functions in the pathway porphyrin-containing compound metabolism; siroheme biosynthesis; sirohydrochlorin from precorrin-2: step 1/1. In terms of biological role, catalyzes the dehydrogenation of precorrin-2 to form sirohydrochlorin which is used as a precursor in both siroheme biosynthesis and in the anaerobic branch of adenosylcobalamin biosynthesis. This Bacillus subtilis (strain 168) protein is Precorrin-2 dehydrogenase (sirC).